The following is a 165-amino-acid chain: SsrA-binding protein (165 aa).

The segment at 141–165 (KLHDKRENEKRKQSEREVKSALARY) is disordered. The segment covering 144–159 (DKRENEKRKQSEREVK) has biased composition (basic and acidic residues).

The protein belongs to the SmpB family.

The protein localises to the cytoplasm. Functionally, required for rescue of stalled ribosomes mediated by trans-translation. Binds to transfer-messenger RNA (tmRNA), required for stable association of tmRNA with ribosomes. tmRNA and SmpB together mimic tRNA shape, replacing the anticodon stem-loop with SmpB. tmRNA is encoded by the ssrA gene; the 2 termini fold to resemble tRNA(Ala) and it encodes a 'tag peptide', a short internal open reading frame. During trans-translation Ala-aminoacylated tmRNA acts like a tRNA, entering the A-site of stalled ribosomes, displacing the stalled mRNA. The ribosome then switches to translate the ORF on the tmRNA; the nascent peptide is terminated with the 'tag peptide' encoded by the tmRNA and targeted for degradation. The ribosome is freed to recommence translation, which seems to be the essential function of trans-translation. This Prochlorococcus marinus (strain SARG / CCMP1375 / SS120) protein is SsrA-binding protein.